We begin with the raw amino-acid sequence, 279 residues long: MFSSSQFEPNSGFSGGGFMSSQPSQAYESSSSTAKNRDFQGLVPVTVKQITECFQSSGEKSGLVINGISLTNVSLVGLVCDKDESKVTEVRFTLDDGTGRIDCKRWVSETFDAREMESVRDGTYVRLSGHLKTFQGKTQLLVFSVRPIMDFNEVTFHYIECIHFYSQNSESQRQQVGDVTQSVNTTFQGGSNTNQATLLNPVVSSQNNDGNGRKNLDDMILDYLKQPACTARQQGIHIDEIAQQLKIPKNKLEGVVQSLEGDGLIYSTIDEYHFKHVEL.

The tract at residues 1 to 33 (MFSSSQFEPNSGFSGGGFMSSQPSQAYESSSST) is disordered. Residues 19–32 (MSSQPSQAYESSSS) show a composition bias toward low complexity. A DNA-binding region (OB) is located at residues 73 to 148 (VSLVGLVCDK…QLLVFSVRPI (76 aa)).

This sequence belongs to the replication factor A protein 2 family. Heterotrimer of RPA1, RPA2 and RPA3 (canonical replication protein A complex). Interacts with ROS1. Binds to ASE1/At3g02920, PDX2, At5g62350, RPA1A/At2g06510, ARF1/At1g10630, At4g18590 and At3g52630. Post-translationally, phosphorylated in a cell-cycle-dependent manner (from the S phase until mitosis). In response to DNA damage, recruited to DNA-repair nuclear foci, as a hypophosphorylated form. In terms of tissue distribution, strongly expressed in shoot and root meristems. Present in seedlings, roots, leaves, siliques and flowers.

Its subcellular location is the nucleus. In terms of biological role, component of the replication protein A complex (RPA) required for DNA recombination, repair and replication. The activity of RPA is mediated by single-stranded DNA binding and protein interactions. Required fo cell division in meristems. Involved in the maintenance of transcriptional epigenetic gene silencing (TGS) at specific loci (including some transposons) by regulating histone H3 acetylation, 'Lys-4' and 'Lys-9' methylation. The protein is Replication protein A 32 kDa subunit A (RPA2A) of Arabidopsis thaliana (Mouse-ear cress).